The chain runs to 196 residues: Neuropeptide prohormone-4 (196 aa).

Positions 1-25 (MSSPLRMDVTFLLAAIAVTWVCGLK) are cleaved as a signal peptide. The region spanning 50–90 (DCDIASPFKCEESPTCLRLFQVCNGRWDCEHGSDEDNALCA) is the LDL-receptor class A domain. 3 cysteine pairs are disulfide-bonded: C51–C65, C59–C78, and C72–C89.

Expressed by the venom duct.

Its subcellular location is the secreted. The protein is Neuropeptide prohormone-4 of Conus victoriae (Queen Victoria cone).